The primary structure comprises 208 residues: Probable nicotinate-nucleotide adenylyltransferase (208 aa).

This sequence belongs to the NadD family.

The catalysed reaction is nicotinate beta-D-ribonucleotide + ATP + H(+) = deamido-NAD(+) + diphosphate. It participates in cofactor biosynthesis; NAD(+) biosynthesis; deamido-NAD(+) from nicotinate D-ribonucleotide: step 1/1. In terms of biological role, catalyzes the reversible adenylation of nicotinate mononucleotide (NaMN) to nicotinic acid adenine dinucleotide (NaAD). The sequence is that of Probable nicotinate-nucleotide adenylyltransferase from Symbiobacterium thermophilum (strain DSM 24528 / JCM 14929 / IAM 14863 / T).